Here is a 157-residue protein sequence, read N- to C-terminus: Small ribosomal subunit protein uS7 (157 aa).

It belongs to the universal ribosomal protein uS7 family. Part of the 30S ribosomal subunit. Contacts proteins S9 and S11.

Its function is as follows. One of the primary rRNA binding proteins, it binds directly to 16S rRNA where it nucleates assembly of the head domain of the 30S subunit. Is located at the subunit interface close to the decoding center, probably blocks exit of the E-site tRNA. This chain is Small ribosomal subunit protein uS7, found in Leptospira interrogans serogroup Icterohaemorrhagiae serovar copenhageni (strain Fiocruz L1-130).